A 294-amino-acid chain; its full sequence is Bifunctional protein FolD (294 aa).

NADP(+)-binding positions include 166–168, Ser-191, and Ile-232; that span reads GRS.

Belongs to the tetrahydrofolate dehydrogenase/cyclohydrolase family. Homodimer.

The enzyme catalyses (6R)-5,10-methylene-5,6,7,8-tetrahydrofolate + NADP(+) = (6R)-5,10-methenyltetrahydrofolate + NADPH. It catalyses the reaction (6R)-5,10-methenyltetrahydrofolate + H2O = (6R)-10-formyltetrahydrofolate + H(+). It participates in one-carbon metabolism; tetrahydrofolate interconversion. In terms of biological role, catalyzes the oxidation of 5,10-methylenetetrahydrofolate to 5,10-methenyltetrahydrofolate and then the hydrolysis of 5,10-methenyltetrahydrofolate to 10-formyltetrahydrofolate. This Afipia carboxidovorans (strain ATCC 49405 / DSM 1227 / KCTC 32145 / OM5) (Oligotropha carboxidovorans) protein is Bifunctional protein FolD.